A 626-amino-acid polypeptide reads, in one-letter code: Chaperone protein HtpG (626 aa).

An a; substrate-binding region spans residues 1 to 341; that stretch reads METKQFKAES…SEDLSLNISR (341 aa). A b region spans residues 342-552; it reads EILQHDRQLK…EGELSIEMEK (211 aa). Positions 490–509 are disordered; the sequence is DLGIEGEEKENTSSSDDKEN. Residues 498 to 509 are compositionally biased toward basic and acidic residues; it reads KENTSSSDDKEN. The c stretch occupies residues 553 to 626; sequence VLNAMPNNQN…FTNNICKIMK (74 aa).

It belongs to the heat shock protein 90 family. Homodimer.

The protein localises to the cytoplasm. Molecular chaperone. Has ATPase activity. The polypeptide is Chaperone protein HtpG (Clostridium botulinum (strain Okra / Type B1)).